The primary structure comprises 524 residues: CTP synthase (524 aa).

The tract at residues 1-263 (MKKYVIVTGG…HEKIASKLNV (263 aa)) is amidoligase domain. S13 contributes to the CTP binding site. S13 contributes to the UTP binding site. ATP contacts are provided by residues 14 to 19 (GIGKGI) and D71. Positions 71 and 137 each coordinate Mg(2+). CTP contacts are provided by residues 144 to 146 (DIE), 184 to 189 (KTKPTQ), and K220. UTP-binding positions include 184-189 (KTKPTQ) and K220. One can recognise a Glutamine amidotransferase type-1 domain in the interval 282–524 (RIALVGKYLG…YLRKVLEGSQ (243 aa)). An L-glutamine-binding site is contributed by G342. C369 functions as the Nucleophile; for glutamine hydrolysis in the catalytic mechanism. Residues 370–373 (LGMQ), E393, and R451 contribute to the L-glutamine site. Residues H499 and E501 contribute to the active site.

This sequence belongs to the CTP synthase family. Homotetramer.

The catalysed reaction is UTP + L-glutamine + ATP + H2O = CTP + L-glutamate + ADP + phosphate + 2 H(+). The enzyme catalyses L-glutamine + H2O = L-glutamate + NH4(+). It catalyses the reaction UTP + NH4(+) + ATP = CTP + ADP + phosphate + 2 H(+). It functions in the pathway pyrimidine metabolism; CTP biosynthesis via de novo pathway; CTP from UDP: step 2/2. With respect to regulation, allosterically activated by GTP, when glutamine is the substrate; GTP has no effect on the reaction when ammonia is the substrate. The allosteric effector GTP functions by stabilizing the protein conformation that binds the tetrahedral intermediate(s) formed during glutamine hydrolysis. Inhibited by the product CTP, via allosteric rather than competitive inhibition. In terms of biological role, catalyzes the ATP-dependent amination of UTP to CTP with either L-glutamine or ammonia as the source of nitrogen. Regulates intracellular CTP levels through interactions with the four ribonucleotide triphosphates. In Thermotoga maritima (strain ATCC 43589 / DSM 3109 / JCM 10099 / NBRC 100826 / MSB8), this protein is CTP synthase.